A 157-amino-acid polypeptide reads, in one-letter code: 6,7-dimethyl-8-ribityllumazine synthase (157 aa).

Residues F22, 57 to 59 (AYE), and 81 to 83 (TVI) contribute to the 5-amino-6-(D-ribitylamino)uracil site. 86–87 (GT) is a (2S)-2-hydroxy-3-oxobutyl phosphate binding site. The Proton donor role is filled by H89. F114 serves as a coordination point for 5-amino-6-(D-ribitylamino)uracil. R128 is a (2S)-2-hydroxy-3-oxobutyl phosphate binding site.

The protein belongs to the DMRL synthase family. Forms an icosahedral capsid composed of 60 subunits, arranged as a dodecamer of pentamers.

It carries out the reaction (2S)-2-hydroxy-3-oxobutyl phosphate + 5-amino-6-(D-ribitylamino)uracil = 6,7-dimethyl-8-(1-D-ribityl)lumazine + phosphate + 2 H2O + H(+). The protein operates within cofactor biosynthesis; riboflavin biosynthesis; riboflavin from 2-hydroxy-3-oxobutyl phosphate and 5-amino-6-(D-ribitylamino)uracil: step 1/2. In terms of biological role, catalyzes the formation of 6,7-dimethyl-8-ribityllumazine by condensation of 5-amino-6-(D-ribitylamino)uracil with 3,4-dihydroxy-2-butanone 4-phosphate. This is the penultimate step in the biosynthesis of riboflavin. This is 6,7-dimethyl-8-ribityllumazine synthase from Haemophilus influenzae (strain 86-028NP).